The sequence spans 356 residues: CMP-sialic acid transporter 2 (356 aa).

Over residues M1–G24 the composition is skewed to basic and acidic residues. The segment at M1–K44 is disordered. Residues M1–K52 are Cytoplasmic-facing. Residues S27–K44 show a composition bias toward low complexity. The helical transmembrane segment at S53–S73 threads the bilayer. The Lumenal portion of the chain corresponds to K74–S82. The helical transmembrane segment at V83–Y103 threads the bilayer. Residues R104–S125 lie on the Cytoplasmic side of the membrane. Residues V126–A146 traverse the membrane as a helical segment. Residues Y147–D149 lie on the Lumenal side of the membrane. The helical transmembrane segment at A150–L172 threads the bilayer. Residues K173–K175 lie on the Cytoplasmic side of the membrane. A helical transmembrane segment spans residues L176–L196. Residues N197 to W211 lie on the Lumenal side of the membrane. Residues V212–I232 form a helical membrane-spanning segment. The Cytoplasmic segment spans residues K233–N239. The chain crosses the membrane as a helical span at residues I240–C260. Residues V261–S277 are Lumenal-facing. A helical transmembrane segment spans residues F278 to M298. Residues K299–M314 lie on the Cytoplasmic side of the membrane. The chain crosses the membrane as a helical span at residues L315–L335. Residues G336 to K356 lie on the Lumenal side of the membrane.

Belongs to the nucleotide-sugar transporter family. CMP-Sialate:CMP antiporter (TC 2.A.7.12) subfamily. In terms of tissue distribution, expressed in roots, leaves and stalks.

The protein localises to the golgi apparatus membrane. In terms of biological role, sugar transporter involved in the transport of CMP-sialic acid from the cytoplasm into the Golgi. May transport important nucleotide sugars such as CMP-Kdo (2-keto-3-deoxy-D-manno-octulosonic acid) in physiological conditions. In Oryza sativa subsp. japonica (Rice), this protein is CMP-sialic acid transporter 2.